Here is a 113-residue protein sequence, read N- to C-terminus: MSQEIYDYANQLERAVRALPEYQKVLEVKEAIQADASASQLFDEFVAMQEKIQGMMQSGQMPTAEEQTSIQELSQKIEANDQLKAYFEAQQALSVYMSDIERIVFAPLKDLVK.

This sequence belongs to the UPF0342 family.

In Streptococcus pyogenes serotype M18 (strain MGAS8232), this protein is UPF0342 protein spyM18_0873.